Reading from the N-terminus, the 82-residue chain is Small ribosomal subunit protein bS16 (82 aa).

It belongs to the bacterial ribosomal protein bS16 family.

This Microcystis aeruginosa (strain NIES-843 / IAM M-2473) protein is Small ribosomal subunit protein bS16.